The sequence spans 409 residues: Divalent metal cation transporter MntH (409 aa).

11 helical membrane passes run L19–A39, A46–I66, W98–I118, L122–I142, L155–S175, A196–H216, I241–F261, I290–G310, F320–L340, I348–L368, and I388–L408.

The protein belongs to the NRAMP family.

Its subcellular location is the cell inner membrane. Functionally, h(+)-stimulated, divalent metal cation uptake system. The protein is Divalent metal cation transporter MntH of Yersinia enterocolitica serotype O:8 / biotype 1B (strain NCTC 13174 / 8081).